Consider the following 630-residue polypeptide: Cytochrome B pre-mRNA-processing protein 2 (630 aa).

Its subcellular location is the mitochondrion. In terms of biological role, appears to be specifically required for the splicing of the terminal intron (bI5) of the cytochrome b pre-mRNA. Can also stimulates the splicing of the omega intron of the precursor of large ribosomal RNA. This Saccharomyces cerevisiae (strain ATCC 204508 / S288c) (Baker's yeast) protein is Cytochrome B pre-mRNA-processing protein 2 (CBP2).